Here is a 326-residue protein sequence, read N- to C-terminus: Negative regulator of the PHO system (326 aa).

Positions 8-290 (FQQLEKLGEG…ARQALQHPWF (283 aa)) constitute a Protein kinase domain. ATP-binding positions include 14–22 (LGEGTYATV) and K37. Residue D131 is the Proton acceptor of the active site. Positions 300 to 326 (PQHLSDPYQQQQQQQQHPHQPIIDQQY) are disordered. Residues 305–326 (DPYQQQQQQQQHPHQPIIDQQY) are compositionally biased toward low complexity.

Belongs to the protein kinase superfamily. CMGC Ser/Thr protein kinase family. CDC2/CDKX subfamily. Interacts with a number of cyclins.

It carries out the reaction L-seryl-[protein] + ATP = O-phospho-L-seryl-[protein] + ADP + H(+). It catalyses the reaction L-threonyl-[protein] + ATP = O-phospho-L-threonyl-[protein] + ADP + H(+). When phosphate concentrations are high it phosphorylates the PHO4 transcription factor thus establishing repression. This is Negative regulator of the PHO system (PHO85) from Candida albicans (Yeast).